The following is a 607-amino-acid chain: MAKIVGIDLGTTNSLIAYLEGGRPVIIPNAEGSRLTPSIVAFTKDGQLLVGEPAKRQAIVNAERTIRSIKRHMGTNYKVKIDDKEYTPQEISAMILRKLKRDAEAYLGEKIEKAVITVPAYFSDAQRQATKDAGAIAGLEVVRIINEPTAAALAYGLDKEGHQKILVFDLGGGTFDVSILEIGEGVFEVIATAGNNRLGGDDFDERIVNWLIENFMEEHGINLREDKTALQRLYEAAEKAKIELSSKLQTEINLPFIAMKGNTPLHLSYTLTRAKFEELTYDLVEKTKEPTERALKDAGLSPSQIDKIILVGGATRMPCIQEWIKKHFGKEPQRNVNPDEAVALGAAIQAGVIGGEIRDIVLVDVTPLSLGIETLGGVFTKIIERNTPIPVSKSQIFTTAADYQTSVEIHVLQGERALAKDNISLGRFILDGIPPAPRGVPQIEVTFDIDVNGIVHVSAKDKATGREQRITISNAIRLSEAEIKRMTEEAKRFEEEDRKRREEIETKNQAEHLIYTARKTLKDYGDKVSKDIVQKVEDKIKNLEELIKPERINVEQVRKGMEELTQTLGEIGQFMYQSAGSTAGNPGQGQSTENPGGKTIDGDYKVN.

Residue Thr174 is modified to Phosphothreonine; by autocatalysis. The segment covering 577 to 594 (QSAGSTAGNPGQGQSTEN) has biased composition (polar residues). The disordered stretch occupies residues 577–607 (QSAGSTAGNPGQGQSTENPGGKTIDGDYKVN).

Belongs to the heat shock protein 70 family.

In terms of biological role, acts as a chaperone. The polypeptide is Chaperone protein DnaK (Dictyoglomus turgidum (strain DSM 6724 / Z-1310)).